The following is a 459-amino-acid chain: Glutamate--tRNA ligase 2 (459 aa).

Residues 8–18 carry the 'HIGH' region motif; sequence PSPTGYLHIGG. A 'KMSKS' region motif is present at residues 237 to 241; sequence KLSKR. An ATP-binding site is contributed by lysine 240.

It belongs to the class-I aminoacyl-tRNA synthetase family. Glutamate--tRNA ligase type 1 subfamily. Monomer.

It localises to the cytoplasm. It carries out the reaction tRNA(Glu) + L-glutamate + ATP = L-glutamyl-tRNA(Glu) + AMP + diphosphate. Its function is as follows. Catalyzes the attachment of glutamate to tRNA(Glu) in a two-step reaction: glutamate is first activated by ATP to form Glu-AMP and then transferred to the acceptor end of tRNA(Glu). This chain is Glutamate--tRNA ligase 2, found in Campylobacter curvus (strain 525.92).